Reading from the N-terminus, the 88-residue chain is Apolipoprotein C-I (88 aa).

Positions 1 to 26 are cleaved as a signal peptide; that stretch reads MRLILSLPVLVVVLSMVLEGPAPAQA.

It belongs to the apolipoprotein C1 family. Expressed in the liver.

The protein resides in the secreted. Functionally, inhibitor of lipoprotein binding to the low density lipoprotein (LDL) receptor, LDL receptor-related protein, and very low density lipoprotein (VLDL) receptor. Associates with high density lipoproteins (HDL) and the triacylglycerol-rich lipoproteins in the plasma and makes up about 10% of the protein of the VLDL and 2% of that of HDL. Appears to interfere directly with fatty acid uptake and is also the major plasma inhibitor of cholesteryl ester transfer protein (CETP). Binds free fatty acids and reduces their intracellular esterification. Modulates the interaction of APOE with beta-migrating VLDL and inhibits binding of beta-VLDL to the LDL receptor-related protein. In Canis lupus familiaris (Dog), this protein is Apolipoprotein C-I (APOC1).